The chain runs to 214 residues: tRNA (guanine-N(7)-)-methyltransferase (214 aa).

Asp35, Glu60, Asn87, and Asp113 together coordinate S-adenosyl-L-methionine. Asp113 is an active-site residue. 2 residues coordinate substrate: Lys117 and Asp149.

This sequence belongs to the class I-like SAM-binding methyltransferase superfamily. TrmB family.

The enzyme catalyses guanosine(46) in tRNA + S-adenosyl-L-methionine = N(7)-methylguanosine(46) in tRNA + S-adenosyl-L-homocysteine. It participates in tRNA modification; N(7)-methylguanine-tRNA biosynthesis. Its function is as follows. Catalyzes the formation of N(7)-methylguanine at position 46 (m7G46) in tRNA. In Prochlorococcus marinus (strain NATL2A), this protein is tRNA (guanine-N(7)-)-methyltransferase.